A 91-amino-acid chain; its full sequence is Cell division protein FtsB (91 aa).

Residues 1–3 (MKF) lie on the Cytoplasmic side of the membrane. A helical transmembrane segment spans residues 4 to 21 (IVGLLLVLLLALQYQLWI). The Periplasmic portion of the chain corresponds to 22–91 (SKDGLGELRQ…ETFFQVVEEP (70 aa)). The stretch at 26-74 (LGELRQLSRSIKQQRHENATLIERNQVLKAEVQDLKSGLDALEERARSG) forms a coiled coil.

The protein belongs to the FtsB family. Part of a complex composed of FtsB, FtsL and FtsQ.

It is found in the cell inner membrane. In terms of biological role, essential cell division protein. May link together the upstream cell division proteins, which are predominantly cytoplasmic, with the downstream cell division proteins, which are predominantly periplasmic. This chain is Cell division protein FtsB, found in Nitrosococcus oceani (strain ATCC 19707 / BCRC 17464 / JCM 30415 / NCIMB 11848 / C-107).